Here is a 146-residue protein sequence, read N- to C-terminus: Chorion class A protein Ld3/Ld29 (146 aa).

The first 21 residues, 1–21 (MNTFALLSVFIQACLVQSVFS), serve as a signal peptide directing secretion.

It belongs to the chorion protein family.

Its function is as follows. This protein is one of many from the eggshell of the gypsy moth. The protein is Chorion class A protein Ld3/Ld29 of Lymantria dispar (Gypsy moth).